Here is a 163-residue protein sequence, read N- to C-terminus: Protein-export protein SecB (163 aa).

This sequence belongs to the SecB family. Homotetramer, a dimer of dimers. One homotetramer interacts with 1 SecA dimer.

The protein resides in the cytoplasm. Functionally, one of the proteins required for the normal export of preproteins out of the cell cytoplasm. It is a molecular chaperone that binds to a subset of precursor proteins, maintaining them in a translocation-competent state. It also specifically binds to its receptor SecA. The protein is Protein-export protein SecB of Burkholderia cenocepacia (strain ATCC BAA-245 / DSM 16553 / LMG 16656 / NCTC 13227 / J2315 / CF5610) (Burkholderia cepacia (strain J2315)).